A 106-amino-acid chain; its full sequence is uncharacterized protein (106 aa).

The next 2 helical transmembrane spans lie at 53–70 (LLLLTAAILYIVMPLDII) and 74–93 (ILGLGFIDDAAVLGLIWTLI).

The protein resides in the cell membrane. This is an uncharacterized protein from Bacillus subtilis (strain 168).